A 232-amino-acid polypeptide reads, in one-letter code: 6-phosphogluconolactonase (232 aa).

It belongs to the glucosamine/galactosamine-6-phosphate isomerase family. 6-phosphogluconolactonase subfamily.

The catalysed reaction is 6-phospho-D-glucono-1,5-lactone + H2O = 6-phospho-D-gluconate + H(+). It functions in the pathway carbohydrate degradation; pentose phosphate pathway; D-ribulose 5-phosphate from D-glucose 6-phosphate (oxidative stage): step 2/3. Hydrolysis of 6-phosphogluconolactone to 6-phosphogluconate. The polypeptide is 6-phosphogluconolactonase (pgl) (Aggregatibacter actinomycetemcomitans (Actinobacillus actinomycetemcomitans)).